A 109-amino-acid polypeptide reads, in one-letter code: Small ribosomal subunit protein eS25 (109 aa).

The tract at residues 1–36 (MGGASKKPISTVEKRMKKMAEEQQKKQQKRATTKTG) is disordered. Residues 12 to 25 (VEKRMKKMAEEQQK) are compositionally biased toward basic and acidic residues.

Belongs to the eukaryotic ribosomal protein eS25 family.

The chain is Small ribosomal subunit protein eS25 (rps25e) from Sulfurisphaera tokodaii (strain DSM 16993 / JCM 10545 / NBRC 100140 / 7) (Sulfolobus tokodaii).